The primary structure comprises 718 residues: Nucleolar protein 11 (718 aa).

The residue at position 346 (lysine 346) is an N6-methyllysine.

Interacts with UTP4. Interacts with FBL/fibrillarin in a transcription-dependent manner. May associate with the proposed t-UTP subcomplex of the SSU processome containing at least UTP4, WDR43, HEATR1, UTP15, WDR75.

It is found in the nucleus. The protein localises to the nucleolus. In terms of biological role, ribosome biogenesis factor. May be required for both optimal rDNA transcription and small subunit (SSU) pre-rRNA processing at sites A', A0, 1 and 2b. This Pongo abelii (Sumatran orangutan) protein is Nucleolar protein 11 (NOL11).